We begin with the raw amino-acid sequence, 148 residues long: Hemoglobin subunit beta-4 (148 aa).

The Globin domain occupies 3–148 (DWTDPERSAI…VVSALGRQYH (146 aa)). Heme b contacts are provided by H64 and H93.

The protein belongs to the globin family. As to quaternary structure, heterotetramer of two alpha chains and two beta chains. As to expression, red blood cells.

Functionally, involved in oxygen transport from gills to the various peripheral tissues. The protein is Hemoglobin subunit beta-4 (hbb4) of Oncorhynchus mykiss (Rainbow trout).